A 252-amino-acid chain; its full sequence is MNVKVYNLDGSEKGAIELPSVFETEYRPDVIKRAVISSLTARLQPKGSDPLAGYRTSAKSIGKGHGKARVRRTAQGAGAFVPQAVGGRRAHPPKVEKILFERINRKERLKALASAIAASANSEIVAARGHKIEGVPSLPLVVNAEFESLVKTKEVLSVFKALKLEADLERAKDGIKIKAGRAKLRGRKYKKPRSVLVVVGDACDAVAASRNLAGVDVITANDLSAIHIAPGTMAGRLTLWTENAIEKLKERF.

This sequence belongs to the universal ribosomal protein uL4 family. In terms of assembly, part of the 50S ribosomal subunit.

Its function is as follows. One of the primary rRNA binding proteins, this protein initially binds near the 5'-end of the 23S rRNA. It is important during the early stages of 50S assembly. It makes multiple contacts with different domains of the 23S rRNA in the assembled 50S subunit and ribosome. In terms of biological role, forms part of the polypeptide exit tunnel. The protein is Large ribosomal subunit protein uL4 of Methanococcus vannielii (strain ATCC 35089 / DSM 1224 / JCM 13029 / OCM 148 / SB).